We begin with the raw amino-acid sequence, 78 residues long: Small ribosomal subunit protein bS18 (78 aa).

Belongs to the bacterial ribosomal protein bS18 family. In terms of assembly, part of the 30S ribosomal subunit. Forms a tight heterodimer with protein bS6.

Binds as a heterodimer with protein bS6 to the central domain of the 16S rRNA, where it helps stabilize the platform of the 30S subunit. This Clostridium novyi (strain NT) protein is Small ribosomal subunit protein bS18.